The sequence spans 591 residues: Homeobox domain-containing transcription factor HOB1 (591 aa).

Residues 1 to 15 show a composition bias toward basic and acidic residues; sequence MEGKNEDMHTPRGPE. Disordered regions lie at residues 1-37 and 148-168; these read MEGK…DMLG and IAGP…RSPA. Residues 176–223 constitute a DNA-binding region (homeobox); the sequence is IAILRESYARNPNPDRKELERLAARTGRPWNKIREYFRQRRNKLRGLE. 2 disordered regions span residues 420-463 and 543-563; these read DAGL…PRES and DAIE…ALTE. Positions 427-441 are enriched in acidic residues; sequence QGEEDQPPTVEESDQ. Residues 543 to 560 show a composition bias toward basic and acidic residues; the sequence is DAIERRNAGESKRKRDDA.

The protein localises to the nucleus. In terms of biological role, general stress-responsive transcription factor that governs multiple stress responses and adaptations. Plays a key role in virulence. Mediates the expression of LAC1, which is the major laccase involved in melanin synthesis. Positively regulates BZP4 induction under conditions of nutrient starvation and basal expression levels of MBS1 and USV101, 3 major transcription factors that independently contribute to melanin production. Also acts as a key regulator of ergosterol gene expression. The protein is Homeobox domain-containing transcription factor HOB1 of Cryptococcus neoformans var. grubii serotype A (strain H99 / ATCC 208821 / CBS 10515 / FGSC 9487) (Filobasidiella neoformans var. grubii).